The primary structure comprises 67 residues: Large ribosomal subunit protein bL35 (67 aa).

This sequence belongs to the bacterial ribosomal protein bL35 family.

The protein is Large ribosomal subunit protein bL35 of Rhizorhabdus wittichii (strain DSM 6014 / CCUG 31198 / JCM 15750 / NBRC 105917 / EY 4224 / RW1) (Sphingomonas wittichii).